The primary structure comprises 582 residues: Threonine--tRNA ligase (582 aa).

The tract at residues 185–478 (DHRKLGKELD…LVEHYGGAFP (294 aa)) is catalytic. Zn(2+) contacts are provided by Cys278, His329, and His455.

This sequence belongs to the class-II aminoacyl-tRNA synthetase family. In terms of assembly, homodimer. Zn(2+) serves as cofactor.

It is found in the cytoplasm. It carries out the reaction tRNA(Thr) + L-threonine + ATP = L-threonyl-tRNA(Thr) + AMP + diphosphate + H(+). In terms of biological role, catalyzes the attachment of threonine to tRNA(Thr) in a two-step reaction: L-threonine is first activated by ATP to form Thr-AMP and then transferred to the acceptor end of tRNA(Thr). Also edits incorrectly charged L-seryl-tRNA(Thr). The chain is Threonine--tRNA ligase from Borrelia garinii subsp. bavariensis (strain ATCC BAA-2496 / DSM 23469 / PBi) (Borreliella bavariensis).